Reading from the N-terminus, the 443-residue chain is 3-phosphoshikimate 1-carboxyvinyltransferase (443 aa).

3-phosphoshikimate contacts are provided by lysine 24, serine 25, and arginine 29. A phosphoenolpyruvate-binding site is contributed by lysine 24. Phosphoenolpyruvate-binding residues include glycine 95 and arginine 123. Residues serine 167, glutamine 169, aspartate 323, and lysine 350 each contribute to the 3-phosphoshikimate site. A phosphoenolpyruvate-binding site is contributed by glutamine 169. Aspartate 323 serves as the catalytic Proton acceptor. Phosphoenolpyruvate is bound by residues arginine 354 and arginine 398.

The protein belongs to the EPSP synthase family. Monomer.

It is found in the cytoplasm. The enzyme catalyses 3-phosphoshikimate + phosphoenolpyruvate = 5-O-(1-carboxyvinyl)-3-phosphoshikimate + phosphate. Its pathway is metabolic intermediate biosynthesis; chorismate biosynthesis; chorismate from D-erythrose 4-phosphate and phosphoenolpyruvate: step 6/7. Its function is as follows. Catalyzes the transfer of the enolpyruvyl moiety of phosphoenolpyruvate (PEP) to the 5-hydroxyl of shikimate-3-phosphate (S3P) to produce enolpyruvyl shikimate-3-phosphate and inorganic phosphate. In Caulobacter vibrioides (strain ATCC 19089 / CIP 103742 / CB 15) (Caulobacter crescentus), this protein is 3-phosphoshikimate 1-carboxyvinyltransferase.